The following is a 289-amino-acid chain: 4-hydroxy-3-methylbut-2-enyl diphosphate reductase (289 aa).

Residue cysteine 12 coordinates [4Fe-4S] cluster. 2 residues coordinate (2E)-4-hydroxy-3-methylbut-2-enyl diphosphate: histidine 41 and histidine 84. Dimethylallyl diphosphate is bound by residues histidine 41 and histidine 84. Residues histidine 41 and histidine 84 each contribute to the isopentenyl diphosphate site. Cysteine 106 is a [4Fe-4S] cluster binding site. Position 134 (histidine 134) interacts with (2E)-4-hydroxy-3-methylbut-2-enyl diphosphate. Position 134 (histidine 134) interacts with dimethylallyl diphosphate. Histidine 134 provides a ligand contact to isopentenyl diphosphate. The active-site Proton donor is glutamate 136. Serine 172 contacts (2E)-4-hydroxy-3-methylbut-2-enyl diphosphate. Position 200 (cysteine 200) interacts with [4Fe-4S] cluster. Residues serine 229, asparagine 231, and serine 273 each contribute to the (2E)-4-hydroxy-3-methylbut-2-enyl diphosphate site. Serine 229, asparagine 231, and serine 273 together coordinate dimethylallyl diphosphate. Residues serine 229, asparagine 231, and serine 273 each contribute to the isopentenyl diphosphate site.

It belongs to the IspH family. The cofactor is [4Fe-4S] cluster.

It catalyses the reaction isopentenyl diphosphate + 2 oxidized [2Fe-2S]-[ferredoxin] + H2O = (2E)-4-hydroxy-3-methylbut-2-enyl diphosphate + 2 reduced [2Fe-2S]-[ferredoxin] + 2 H(+). The enzyme catalyses dimethylallyl diphosphate + 2 oxidized [2Fe-2S]-[ferredoxin] + H2O = (2E)-4-hydroxy-3-methylbut-2-enyl diphosphate + 2 reduced [2Fe-2S]-[ferredoxin] + 2 H(+). Its pathway is isoprenoid biosynthesis; dimethylallyl diphosphate biosynthesis; dimethylallyl diphosphate from (2E)-4-hydroxy-3-methylbutenyl diphosphate: step 1/1. It functions in the pathway isoprenoid biosynthesis; isopentenyl diphosphate biosynthesis via DXP pathway; isopentenyl diphosphate from 1-deoxy-D-xylulose 5-phosphate: step 6/6. Functionally, catalyzes the conversion of 1-hydroxy-2-methyl-2-(E)-butenyl 4-diphosphate (HMBPP) into a mixture of isopentenyl diphosphate (IPP) and dimethylallyl diphosphate (DMAPP). Acts in the terminal step of the DOXP/MEP pathway for isoprenoid precursor biosynthesis. The chain is 4-hydroxy-3-methylbut-2-enyl diphosphate reductase from Opitutus terrae (strain DSM 11246 / JCM 15787 / PB90-1).